Consider the following 567-residue polypeptide: Geranylgeranyl transferase type-2 subunit alpha (567 aa).

PFTA repeat units lie at residues 44 to 78, 88 to 122, 124 to 158, 159 to 193, 207 to 241, and 363 to 397; these read LDESVLELTSQILGANPDFATLWNCRREVLQHLET, LVKAELGFLESCLRVNPKSYGTWHHRCWLLSRLPE, NWARELELCARFLEADERNFHCWDYRRFVAAQAAV, APAEELAFTDSLITRNFSNYSSWHYRSCLLPQLHP, VLLKELELVQNAFFTDPNDQSAWFYHRWLLGRAEP, and VLQSELESCKELQELEPENKWCLLTIILLMRALDP. The residue at position 98 (Ser-98) is a Phosphoserine. 5 LRR repeats span residues 442-463, 464-486, 487-508, 509-530, and 534-555; these read DVRVLHLAHKDLTVLCHLEQLL, LVTHLDLSHNRLRALPPALAALR, CLEVLQASDNALENVDGVANLP, RLQELLLCNNRLQQSAAIQPLV, and RLVLLNLQGNSLCQEEGIQERL.

This sequence belongs to the protein prenyltransferase subunit alpha family. As to quaternary structure, heterotrimer composed of RABGGTA, RABGGTB and CHM; within this trimer, RABGGTA and RABGGTB form the catalytic component B, while CHM (component A) mediates peptide substrate binding. The Rab GGTase dimer (RGGT) interacts with CHM (component A) prior to Rab protein binding; the association is stabilized by geranylgeranyl pyrophosphate (GGpp). The CHM:RGGT:Rab complex is destabilized by GGpp. Interacts with non-phosphorylated form of RAB8A; phosphorylation of RAB8A at 'Thr-72' disrupts this interaction. In terms of tissue distribution, most abundant in the heart, brain, spleen and liver. Less in the lung, muscle, kidney and testis; in these tissues less abundant than the beta subunit.

The enzyme catalyses geranylgeranyl diphosphate + L-cysteinyl-[protein] = S-geranylgeranyl-L-cysteinyl-[protein] + diphosphate. With respect to regulation, the enzymatic reaction requires the aid of a Rab escort protein (also called component A), such as CHM. Catalyzes the transfer of a geranylgeranyl moiety from geranylgeranyl diphosphate to both cysteines of Rab proteins with the C-terminal sequence -XXCC, -XCXC and -CCXX, such as RAB1A, RAB3A, RAB5A and RAB7A. The chain is Geranylgeranyl transferase type-2 subunit alpha (Rabggta) from Rattus norvegicus (Rat).